The primary structure comprises 89 residues: Small ribosomal subunit protein uS15 (89 aa).

The protein belongs to the universal ribosomal protein uS15 family. Part of the 30S ribosomal subunit. Forms a bridge to the 50S subunit in the 70S ribosome, contacting the 23S rRNA.

One of the primary rRNA binding proteins, it binds directly to 16S rRNA where it helps nucleate assembly of the platform of the 30S subunit by binding and bridging several RNA helices of the 16S rRNA. Functionally, forms an intersubunit bridge (bridge B4) with the 23S rRNA of the 50S subunit in the ribosome. The polypeptide is Small ribosomal subunit protein uS15 (Methylobacterium nodulans (strain LMG 21967 / CNCM I-2342 / ORS 2060)).